The sequence spans 60 residues: Large ribosomal subunit protein bL33 (60 aa).

Belongs to the bacterial ribosomal protein bL33 family.

This is Large ribosomal subunit protein bL33 from Flavobacterium johnsoniae (strain ATCC 17061 / DSM 2064 / JCM 8514 / BCRC 14874 / CCUG 350202 / NBRC 14942 / NCIMB 11054 / UW101) (Cytophaga johnsonae).